We begin with the raw amino-acid sequence, 259 residues long: Phosphatidylglycerol--prolipoprotein diacylglyceryl transferase (259 aa).

The next 4 membrane-spanning stretches (helical) occupy residues 12–32, 41–61, 80–100, and 109–129; these read LAIHWYALCILSGLVLAVYLA, ISSDAIFDFILIAFPLAIVGA, IIAIWNGGIAIYGGLITGALV, and VLNPIHFLDIAAPSVMVAQAI. Arg-131 lines the a 1,2-diacyl-sn-glycero-3-phospho-(1'-sn-glycerol) pocket. Transmembrane regions (helical) follow at residues 167–187, 194–214, and 226–246; these read IPTFLYESLWNLLGFVIIMMW, LLDGEIFAFYLIWYGSGRLVI, and GIRISQYVSALLIIIGLIFVI.

It belongs to the Lgt family.

The protein resides in the cell membrane. The catalysed reaction is L-cysteinyl-[prolipoprotein] + a 1,2-diacyl-sn-glycero-3-phospho-(1'-sn-glycerol) = an S-1,2-diacyl-sn-glyceryl-L-cysteinyl-[prolipoprotein] + sn-glycerol 1-phosphate + H(+). It functions in the pathway protein modification; lipoprotein biosynthesis (diacylglyceryl transfer). Catalyzes the transfer of the diacylglyceryl group from phosphatidylglycerol to the sulfhydryl group of the N-terminal cysteine of a prolipoprotein, the first step in the formation of mature lipoproteins. The chain is Phosphatidylglycerol--prolipoprotein diacylglyceryl transferase from Streptococcus pyogenes serotype M49 (strain NZ131).